The following is a 286-amino-acid chain: N-alpha-acetyltransferase 80 (286 aa).

The disordered stretch occupies residues 33 to 54 (TFNPGPTELTLDPEHQPEETPA). An N-acetyltransferase domain is found at 60–207 (LTLEPVHRRP…VFTSRRLPAT (148 aa)). Substrate-binding positions include arginine 85 and 90-93 (RLHS). Acetyl-CoA is bound by residues 141-143 (VVV), 149-154 (GRGFGR), and glutamine 179. Positions 212–269 (FPTAPSPRPPRKAPNLTAQAAPRGPKGPPLPPPPPLPECLTISPPVPSGPPSKSLLET) are disordered. Over residues 236-248 (PKGPPLPPPPPLP) the composition is skewed to pro residues.

The protein belongs to the acetyltransferase family. Strongly expressed in heart and skeletal muscle, followed by brain and pancreas, with weak expression in kidney, liver, and lung and no expression in placenta.

The protein resides in the cytoplasm. It localises to the cytosol. The catalysed reaction is N-terminal L-aspartyl-L-aspartyl-L-aspartyl-[protein] + acetyl-CoA = N-terminal N-acetyl-L-aspartyl-L-aspartyl-L-aspartyl-[protein] + CoA + H(+). It catalyses the reaction N-terminal L-glutamyl-L-glutamyl-L-glutamyl-[protein] + acetyl-CoA = N-terminal N-acetyl-L-glutamyl-L-glutamyl-L-glutamyl-[protein] + CoA + H(+). In terms of biological role, N-alpha-acetyltransferase that specifically mediates the acetylation of the acidic amino terminus of processed forms of beta- and gamma-actin (ACTB and ACTG, respectively). N-terminal acetylation of processed beta- and gamma-actin regulates actin filament depolymerization and elongation. In vivo, preferentially displays N-terminal acetyltransferase activity towards acid N-terminal sequences starting with Asp-Asp-Asp and Glu-Glu-Glu. In vitro, shows high activity towards Met-Asp-Glu-Leu and Met-Asp-Asp-Asp. May act as a tumor suppressor. This chain is N-alpha-acetyltransferase 80, found in Homo sapiens (Human).